A 520-amino-acid chain; its full sequence is Dynein axonemal assembly factor 8 (520 aa).

4 disordered regions span residues 93 to 202 (PVLV…LRQE), 217 to 256 (RDAC…EGPP), 328 to 366 (CARK…QLAQ), and 388 to 520 (DHLS…LEQL). Residues 111-125 (RTKDASSQEGRDPGR) show a composition bias toward basic and acidic residues. A Phosphoserine modification is found at serine 161. Phosphoserine is present on serine 351. The segment covering 401 to 410 (DSEEEEEEEM) has biased composition (acidic residues). Over residues 420–437 (SPSSLGLRTCTGKSQLLQ) the composition is skewed to polar residues.

In terms of tissue distribution, expressed in respiratory ciliated cells (at protein level).

The protein resides in the dynein axonemal particle. It localises to the cytoplasm. In cyliated cells, dynein axonemal particle-specific protein required for deployment of ODA to the axoneme. Interacts with outer dynein arm (ODA) subunits. In Homo sapiens (Human), this protein is Dynein axonemal assembly factor 8.